Consider the following 398-residue polypeptide: Succinate--CoA ligase [ADP-forming] subunit beta (398 aa).

Residues 9 to 254 (KRLLHEYGAP…LSEEDPKEIE (246 aa)) form the ATP-grasp domain. ATP-binding positions include Lys46, 53–55 (GRG), Glu109, Ala112, and Glu117. The Mg(2+) site is built by Asn209 and Asp223. Residues Asn274 and 331–333 (GIM) contribute to the substrate site.

This sequence belongs to the succinate/malate CoA ligase beta subunit family. As to quaternary structure, heterotetramer of two alpha and two beta subunits. Mg(2+) is required as a cofactor.

The catalysed reaction is succinate + ATP + CoA = succinyl-CoA + ADP + phosphate. The enzyme catalyses GTP + succinate + CoA = succinyl-CoA + GDP + phosphate. It functions in the pathway carbohydrate metabolism; tricarboxylic acid cycle; succinate from succinyl-CoA (ligase route): step 1/1. Succinyl-CoA synthetase functions in the citric acid cycle (TCA), coupling the hydrolysis of succinyl-CoA to the synthesis of either ATP or GTP and thus represents the only step of substrate-level phosphorylation in the TCA. The beta subunit provides nucleotide specificity of the enzyme and binds the substrate succinate, while the binding sites for coenzyme A and phosphate are found in the alpha subunit. In Bartonella tribocorum (strain CIP 105476 / IBS 506), this protein is Succinate--CoA ligase [ADP-forming] subunit beta.